We begin with the raw amino-acid sequence, 132 residues long: MATHNSLFQDSDVRKHPEGIAVSVQLPWYRSLWLSAVDDVAATVNGVKIPRESLRFELQGQTYSIAELPEQWETLWFVADKPDVVIPLDRIPDAGEEIDVEVILTLRLLYMQIAPMRYVGNRVAVERKVVLA.

The protein belongs to the C-glycoside deglycosidase beta subunit family. In terms of assembly, heterodimer composed of an alpha subunit (CarB2) and a beta subunit (CarC2). Requires a divalent metal cation as cofactor.

The catalysed reaction is 3''-dehydroorientin = 1,5-anhydro-D-erythro-hex-1-en-3-ulose + luteolin. Its activity is regulated as follows. Activity is strongly reduced in the presence of chelating agents. Carbon-carbon bond-cleaving enzyme which participates in the metabolism of C-glycosides. Acts on the C8-glycosylated compound 3''-dehydroorientin (3''-oxo-orientin). The protein is C-glycoside deglycosidase beta subunit of Arthrobacter globiformis (strain ATCC 8010 / DSM 20124 / JCM 1332 / NBRC 12137 / NCIMB 8907 / NRRL B-2979 / 168).